Consider the following 72-residue polypeptide: Translation initiation factor IF-1 (72 aa).

The S1-like domain maps to 1 to 72; the sequence is MSKDDVIEMQ…TRGRITWRAK (72 aa).

The protein belongs to the IF-1 family. Component of the 30S ribosomal translation pre-initiation complex which assembles on the 30S ribosome in the order IF-2 and IF-3, IF-1 and N-formylmethionyl-tRNA(fMet); mRNA recruitment can occur at any time during PIC assembly.

The protein resides in the cytoplasm. Its function is as follows. One of the essential components for the initiation of protein synthesis. Stabilizes the binding of IF-2 and IF-3 on the 30S subunit to which N-formylmethionyl-tRNA(fMet) subsequently binds. Helps modulate mRNA selection, yielding the 30S pre-initiation complex (PIC). Upon addition of the 50S ribosomal subunit IF-1, IF-2 and IF-3 are released leaving the mature 70S translation initiation complex. The chain is Translation initiation factor IF-1 from Clostridium kluyveri (strain ATCC 8527 / DSM 555 / NBRC 12016 / NCIMB 10680 / K1).